The primary structure comprises 209 residues: Protease (209 aa).

Residues His55, Asp72, and Cys123 contribute to the active site.

The protein belongs to the peptidase C5 family. In terms of assembly, interacts with protease cofactor pVI-C; this interaction is necessary for protease activation.

It is found in the virion. It localises to the host nucleus. It catalyses the reaction Cleaves proteins of the adenovirus and its host cell at two consensus sites: -Yaa-Xaa-Gly-Gly-|-Xaa- and -Yaa-Xaa-Gly-Xaa-|-Gly- (in which Yaa is Met, Ile or Leu, and Xaa is any amino acid).. Its activity is regulated as follows. Requires DNA and protease cofactor for maximal activation. Inside nascent virions, becomes partially activated by binding to the viral DNA, allowing it to cleave the cofactor that binds to the protease and fully activates it. Actin, like the viral protease cofactor, seems to act as a cofactor in the cleavage of cytokeratin 18 and of actin itself. Functionally, cleaves viral precursor proteins (pTP, pIIIa, pVI, pVII, pVIII, and pX) inside newly assembled particles giving rise to mature virions. Protease complexed to its cofactor slides along the viral DNA to specifically locate and cleave the viral precursors. Mature virions have a weakened organization compared to the unmature virions, thereby facilitating subsequent uncoating. Without maturation, the particle lacks infectivity and is unable to uncoat. Late in adenovirus infection, in the cytoplasm, may participate in the cytoskeleton destruction. Cleaves host cell cytoskeletal keratins K7 and K18. The protein is Protease of Human adenovirus D serotype 17 (HAdV-17).